The chain runs to 112 residues: UPF0145 protein MmarC6_1828 (112 aa).

It belongs to the UPF0145 family.

In Methanococcus maripaludis (strain C6 / ATCC BAA-1332), this protein is UPF0145 protein MmarC6_1828.